The primary structure comprises 386 residues: Caspase-1-A (386 aa).

Positions M1–E100 are excised as a propeptide. The CARD domain occupies S22–L88. Catalysis depends on residues H218 and C274. A propeptide spanning residues D287 to D296 is cleaved from the precursor.

It belongs to the peptidase C14A family. In terms of assembly, heterotetramer that consists of two anti-parallel arranged heterodimers, each one formed by a 20 kDa (Caspase-1 subunit p20) and a 10 kDa (Caspase-1 subunit p10) subunit. As to quaternary structure, heterotetramer that consists of two anti-parallel arranged heterodimers, each one formed by a 20 kDa (Caspase-1 subunit p20) and a 10 kDa (Caspase-1 subunit p10) subunit. Can form a heterodimer with isoform epsilon which then has an inhibitory effect. In terms of processing, the two subunits are derived from the precursor sequence by an autocatalytic mechanism.

Its subcellular location is the cytoplasm. It is found in the cell membrane. It catalyses the reaction Strict requirement for an Asp residue at position P1 and has a preferred cleavage sequence of Tyr-Val-Ala-Asp-|-.. In terms of biological role, thiol protease involved in a variety of inflammatory processes by proteolytically cleaving other proteins, such as the precursors of the inflammatory cytokines interleukin-1 beta (IL1B) and interleukin 18 (IL18) as well as the pyroptosis inducer Gasdermin-D (GSDMD), into active mature peptides. Plays a key role in cell immunity as an inflammatory response initiator: once activated through formation of an inflammasome complex, it initiates a pro-inflammatory response through the cleavage of the two inflammatory cytokines IL1B and IL18, releasing the mature cytokines which are involved in a variety of inflammatory processes. Cleaves a tetrapeptide after an Asp residue at position P1. Also initiates pyroptosis, a programmed lytic cell death pathway, through cleavage of GSDMD. The sequence is that of Caspase-1-A (casp1-a) from Xenopus laevis (African clawed frog).